Consider the following 120-residue polypeptide: A-type ATP synthase subunit F (120 aa).

The protein belongs to the V-ATPase F subunit family. In terms of assembly, has multiple subunits with at least A(3), B(3), C, D, E, F, H, I and proteolipid K(x).

The protein localises to the cell membrane. Its function is as follows. Component of the A-type ATP synthase that produces ATP from ADP in the presence of a proton gradient across the membrane. This Halobacterium salinarum (strain ATCC 29341 / DSM 671 / R1) protein is A-type ATP synthase subunit F.